A 130-amino-acid chain; its full sequence is UPF0102 protein RPA0323 (130 aa).

Belongs to the UPF0102 family.

The sequence is that of UPF0102 protein RPA0323 from Rhodopseudomonas palustris (strain ATCC BAA-98 / CGA009).